The following is an 82-amino-acid chain: Protein C2 (82 aa).

The sequence is that of Protein C2 (C2) from Sterkiella nova (Ciliate).